A 959-amino-acid polypeptide reads, in one-letter code: Isoleucine--tRNA ligase (959 aa).

The short motif at 66-76 (PYANGDLHIGH) is the 'HIGH' region element. Residue Glu592 participates in L-isoleucyl-5'-AMP binding. Positions 633–637 (KMSKS) match the 'KMSKS' region motif. Lys636 contacts ATP. Zn(2+) contacts are provided by Cys922, Cys925, Cys942, and Cys945.

This sequence belongs to the class-I aminoacyl-tRNA synthetase family. IleS type 1 subfamily. In terms of assembly, monomer. Zn(2+) serves as cofactor.

The protein localises to the cytoplasm. The enzyme catalyses tRNA(Ile) + L-isoleucine + ATP = L-isoleucyl-tRNA(Ile) + AMP + diphosphate. Its function is as follows. Catalyzes the attachment of isoleucine to tRNA(Ile). As IleRS can inadvertently accommodate and process structurally similar amino acids such as valine, to avoid such errors it has two additional distinct tRNA(Ile)-dependent editing activities. One activity is designated as 'pretransfer' editing and involves the hydrolysis of activated Val-AMP. The other activity is designated 'posttransfer' editing and involves deacylation of mischarged Val-tRNA(Ile). The sequence is that of Isoleucine--tRNA ligase from Ralstonia pickettii (strain 12J).